The chain runs to 275 residues: Polyamine aminopropyltransferase (275 aa).

The PABS domain maps to 2-235 (HLWFTEKQND…AMWSFTIGSK (234 aa)). Residue glutamine 31 coordinates S-methyl-5'-thioadenosine. The spermidine site is built by histidine 62 and aspartate 86. Residues glutamate 106 and 137–138 (DG) each bind S-methyl-5'-thioadenosine. The active-site Proton acceptor is aspartate 155. 155–158 (DSTD) is a spermidine binding site. Residue proline 162 coordinates S-methyl-5'-thioadenosine.

It belongs to the spermidine/spermine synthase family. Homodimer or homotetramer.

The protein localises to the cytoplasm. It carries out the reaction S-adenosyl 3-(methylsulfanyl)propylamine + putrescine = S-methyl-5'-thioadenosine + spermidine + H(+). The protein operates within amine and polyamine biosynthesis; spermidine biosynthesis; spermidine from putrescine: step 1/1. In terms of biological role, catalyzes the irreversible transfer of a propylamine group from the amino donor S-adenosylmethioninamine (decarboxy-AdoMet) to putrescine (1,4-diaminobutane) to yield spermidine. This is Polyamine aminopropyltransferase from Desulforudis audaxviator (strain MP104C).